A 512-amino-acid polypeptide reads, in one-letter code: NADH-quinone oxidoreductase subunit N (512 aa).

14 helical membrane passes run 32-52 (VLPA…SVLF), 57-77 (FIIV…AVFY), 97-117 (VLSF…AAIV), 126-146 (IEFP…TLMT), 151-171 (FILV…LIGM), 186-206 (FLLG…LFGG), 231-251 (IGLV…PYHA), 264-284 (VTGY…LILY), 296-316 (WAWL…LLAL), 324-344 (MLAY…SAGI), 348-368 (VLFY…ILAY), 392-412 (AIAI…GGFW), 431-451 (ILLI…LRIG), and 473-493 (VGVT…WFLL).

This sequence belongs to the complex I subunit 2 family. As to quaternary structure, NDH-1 is composed of 14 different subunits. Subunits NuoA, H, J, K, L, M, N constitute the membrane sector of the complex.

It localises to the cell inner membrane. It carries out the reaction a quinone + NADH + 5 H(+)(in) = a quinol + NAD(+) + 4 H(+)(out). In terms of biological role, NDH-1 shuttles electrons from NADH, via FMN and iron-sulfur (Fe-S) centers, to quinones in the respiratory chain. The immediate electron acceptor for the enzyme in this species is believed to be ubiquinone. Couples the redox reaction to proton translocation (for every two electrons transferred, four hydrogen ions are translocated across the cytoplasmic membrane), and thus conserves the redox energy in a proton gradient. The chain is NADH-quinone oxidoreductase subunit N from Leptospira interrogans serogroup Icterohaemorrhagiae serovar Lai (strain 56601).